Consider the following 415-residue polypeptide: Histidine--tRNA ligase (415 aa).

This sequence belongs to the class-II aminoacyl-tRNA synthetase family. Homodimer.

It is found in the cytoplasm. It carries out the reaction tRNA(His) + L-histidine + ATP = L-histidyl-tRNA(His) + AMP + diphosphate + H(+). The sequence is that of Histidine--tRNA ligase from Idiomarina loihiensis (strain ATCC BAA-735 / DSM 15497 / L2-TR).